A 446-amino-acid chain; its full sequence is Argininosuccinate lyase (446 aa).

This sequence belongs to the lyase 1 family. Argininosuccinate lyase subfamily.

It is found in the cytoplasm. The catalysed reaction is 2-(N(omega)-L-arginino)succinate = fumarate + L-arginine. It functions in the pathway amino-acid biosynthesis; L-arginine biosynthesis; L-arginine from L-ornithine and carbamoyl phosphate: step 3/3. The sequence is that of Argininosuccinate lyase from Parabacteroides distasonis (strain ATCC 8503 / DSM 20701 / CIP 104284 / JCM 5825 / NCTC 11152).